The chain runs to 164 residues: ATP synthase subunit b 1 (164 aa).

A helical transmembrane segment spans residues methionine 4 to tyrosine 24.

Belongs to the ATPase B chain family. As to quaternary structure, F-type ATPases have 2 components, F(1) - the catalytic core - and F(0) - the membrane proton channel. F(1) has five subunits: alpha(3), beta(3), gamma(1), delta(1), epsilon(1). F(0) has three main subunits: a(1), b(2) and c(10-14). The alpha and beta chains form an alternating ring which encloses part of the gamma chain. F(1) is attached to F(0) by a central stalk formed by the gamma and epsilon chains, while a peripheral stalk is formed by the delta and b chains.

The protein localises to the cell inner membrane. In terms of biological role, f(1)F(0) ATP synthase produces ATP from ADP in the presence of a proton or sodium gradient. F-type ATPases consist of two structural domains, F(1) containing the extramembraneous catalytic core and F(0) containing the membrane proton channel, linked together by a central stalk and a peripheral stalk. During catalysis, ATP synthesis in the catalytic domain of F(1) is coupled via a rotary mechanism of the central stalk subunits to proton translocation. Functionally, component of the F(0) channel, it forms part of the peripheral stalk, linking F(1) to F(0). This is ATP synthase subunit b 1 from Azorhizobium caulinodans (strain ATCC 43989 / DSM 5975 / JCM 20966 / LMG 6465 / NBRC 14845 / NCIMB 13405 / ORS 571).